The sequence spans 156 residues: Arginine repressor (156 aa).

The protein belongs to the ArgR family.

It is found in the cytoplasm. It functions in the pathway amino-acid biosynthesis; L-arginine biosynthesis [regulation]. In terms of biological role, regulates arginine biosynthesis genes. This Salmonella agona (strain SL483) protein is Arginine repressor.